A 348-amino-acid polypeptide reads, in one-letter code: Short-chain dehydrogenase fogG (348 aa).

Residues Leu51, Arg75, Asp100, and Asn126 each coordinate NADP(+). Active-site proton donor residues include Ser180 and Tyr215. NADP(+) is bound by residues Tyr215 and Lys219. The active-site Lowers pKa of active site Tyr is the Lys219.

Belongs to the short-chain dehydrogenases/reductases (SDR) family.

It participates in secondary metabolite biosynthesis. Functionally, short-chain dehydrogenase; part of the gene cluster that mediates the biosynthesis of flavoglaucin and congeners (including aspergin, dihydroauroglaucin and auroglaucin), prenylated salicylaldehyde derivatives carrying a saturated or an unsaturated C-7 side chain. The PKS fogA releases the carboxylic acid (8E,10E,12E)-3,5,7-trihydroxytetradeca-8,10,12-trienoic acid as its product, as well as derivatives with one and two double bonds. FogA is indeed able to reduce the initial triketide, thus being at least partially responsible for the differently saturated heptyl side chains of flavoglaucin congeners. The oxidoreductases fogB, fogC and fogD modify the nascent polyketide in fogA-bound form and, together, fogA, fogB, fogC and fogD are necessary for the formation of the aromatic core and the cyclized PKS products are released as salicyl alcohols. In particular, fogB is responsible for oxidation of a hydroxyl group or reduction of remaining double bond(s) at the C-7 residue whereas fogD is probably involved in the reductive release of the modified PKS products. The cytochrome P450 monooxygenase fogE is then responsible for the hydroxylation at C-3 of the benzene ring. The fogE products are substrates of the prenyltransferase fogH and the prenylated benzyl alcohols are subsequently oxidized by the fogF to produce the final aryl aldehydes flavoglaucin and congeners. The short-chain dehydrogenase fogG does not seem to be involved in the biosynthesis of the prenylated salicylaldehyde derivatives. The sequence is that of Short-chain dehydrogenase fogG from Aspergillus ruber (strain CBS 135680).